Here is a 196-residue protein sequence, read N- to C-terminus: HTH-type transcriptional regulator UidR (196 aa).

An HTH tetR-type domain is found at 10–70 (QPTRTRILNA…AIILQDQERA (61 aa)). Positions 33 to 52 (SMKAICKSCAISPGTLYHHF) form a DNA-binding region, H-T-H motif.

In terms of biological role, repressor for the uidRABC (gusRABC) operon. The chain is HTH-type transcriptional regulator UidR (uidR) from Escherichia coli O157:H7.